Reading from the N-terminus, the 445-residue chain is N-succinylarginine dihydrolase (445 aa).

Residues 19–28 (AGLSYGNVAS), asparagine 110, and 137–138 (HR) each bind substrate. The active site involves glutamate 174. A substrate-binding site is contributed by arginine 214. Residue histidine 250 is part of the active site. Residues aspartate 252 and asparagine 363 each coordinate substrate. Cysteine 369 serves as the catalytic Nucleophile.

Belongs to the succinylarginine dihydrolase family. As to quaternary structure, homodimer.

It carries out the reaction N(2)-succinyl-L-arginine + 2 H2O + 2 H(+) = N(2)-succinyl-L-ornithine + 2 NH4(+) + CO2. It participates in amino-acid degradation; L-arginine degradation via AST pathway; L-glutamate and succinate from L-arginine: step 2/5. In terms of biological role, catalyzes the hydrolysis of N(2)-succinylarginine into N(2)-succinylornithine, ammonia and CO(2). The chain is N-succinylarginine dihydrolase from Aeromonas hydrophila subsp. hydrophila (strain ATCC 7966 / DSM 30187 / BCRC 13018 / CCUG 14551 / JCM 1027 / KCTC 2358 / NCIMB 9240 / NCTC 8049).